The following is a 579-amino-acid chain: Pentatricopeptide repeat-containing protein At2g15690, mitochondrial (579 aa).

The transit peptide at 1-49 (MSSLMAIRCARTQNIVTIGSLLQLRSSFPRLSSQFHFSGTLNSIPIKHL) directs the protein to the mitochondrion. Polar residues-rich tracts occupy residues 56 to 71 (NDYH…SQHQ) and 78 to 103 (SFDS…TQHG). The segment at 56–208 (NDYHQNPQSG…QMNEVAPPPS (153 aa)) is disordered. 2 stretches are compositionally biased toward low complexity: residues 117 to 136 (GGQR…QMSQ) and 148 to 199 (RPQY…SPNQ). PPR repeat units follow at residues 235-269 (DREC…KFRG), 270-300 (DPKL…MVDK), 301-335 (DMDS…GLKP), 336-371 (NEET…GISP), and 372-402 (KTEH…LPFE). The tract at residues 485-579 (GVVYVPDTRF…DGKCSCGDYW (95 aa)) is type DYW motif.

It belongs to the PPR family. PCMP-H subfamily.

It is found in the mitochondrion. The polypeptide is Pentatricopeptide repeat-containing protein At2g15690, mitochondrial (PCMP-H66) (Arabidopsis thaliana (Mouse-ear cress)).